Reading from the N-terminus, the 1040-residue chain is Multidrug resistance protein MdtB (1040 aa).

The next 12 membrane-spanning stretches (helical) occupy residues 25–45, 347–367, 369–389, 396–416, 440–460, 472–492, 537–557, 863–883, 888–908, 910–930, 968–988, and 998–1018; these read LLMA…PVAA, LMLA…NIPA, IIPG…MVFL, LTLM…IVVI, IGFT…PLLF, FAVT…TLTP, WLTL…WIVI, LGST…VLGV, FIHP…ALLA, IIAG…LIGI, ILMT…STGV, and IAMV…TPVI.

Belongs to the resistance-nodulation-cell division (RND) (TC 2.A.6) family. MdtB subfamily. As to quaternary structure, part of a tripartite efflux system composed of MdtA, MdtB and MdtC. MdtB forms a heteromultimer with MdtC.

It is found in the cell inner membrane. This chain is Multidrug resistance protein MdtB, found in Salmonella choleraesuis (strain SC-B67).